The primary structure comprises 360 residues: MKNIFLHSLSLENYRNFKNLELKTDNTPIILIGENGSGKTNILEAISLFYPGRGLRSAKLANVCKTSEDHCLVKALLQSKLGLAEFTTQFKRSSNRRITEYNESKIANNELSKFTSMVWLTPHMEGIFTSGSNDRRKFLDRIVYNFDPKHAELVSKYEYYMHERNKILVEDIRDDNWLKIIEEKMADISNHIANNRLKTLEFMQQAIDDLENEFPKADLSIDGIVEQKILNGKENIVSFITAELYQTRSKDKLLGRTSFGVHKSDFLVKHQKKNILAKFCSTGEQKAILIAIILAEMNYAIKLTKIAPILLLDEVFVHLDDKRRQYLIEFLTGLNMQLWVTTTNLEGIENFANKAQLIKL.

33 to 40 lines the ATP pocket; that stretch reads GENGSGKT.

Belongs to the RecF family.

It localises to the cytoplasm. The RecF protein is involved in DNA metabolism; it is required for DNA replication and normal SOS inducibility. RecF binds preferentially to single-stranded, linear DNA. It also seems to bind ATP. This is DNA replication and repair protein RecF from Rickettsia rickettsii (strain Iowa).